The following is a 776-amino-acid chain: Protein SEY1 (776 aa).

Residues 1–681 (MADRPAIQLI…KRSIITTRTH (681 aa)) are Cytoplasmic-facing. A GB1/RHD3-type G domain is found at 34 to 263 (GLDYHVISVF…TENYYFKPQY (230 aa)). GTP is bound at residue 44–51 (GSQSSGKS). The chain crosses the membrane as a helical span at residues 682–702 (IPPWIYVLLAVLGWNEFVAVI). The Lumenal portion of the chain corresponds to 703-705 (RNP). Residues 706 to 726 (LFVTLTLILGATFFVIHKFGL) form a helical membrane-spanning segment. Residues 727–776 (WGPVVNVVQSAVGETRTAIKDKLRQFVVEDHEVKESFEMKDFSKNEQKEK) are Cytoplasmic-facing.

Belongs to the TRAFAC class dynamin-like GTPase superfamily. GB1/RHD3 GTPase family. RHD3 subfamily. In terms of assembly, interacts with RTN1 and YOP1; GTP binding is not required for these interactions.

Its subcellular location is the endoplasmic reticulum membrane. Cooperates with the reticulon proteins RTN1 and RTN2 and the tubule-shaping DP1 family protein YOP1 to generate and maintain the structure of the tubular endoplasmic reticulum network. Has GTPase activity, which is required for its function in ER organization. The protein is Protein SEY1 of Saccharomyces cerevisiae (strain ATCC 204508 / S288c) (Baker's yeast).